Consider the following 97-residue polypeptide: Large ribosomal subunit protein uL23 (97 aa).

Belongs to the universal ribosomal protein uL23 family. As to quaternary structure, part of the 50S ribosomal subunit. Contacts protein L29, and trigger factor when it is bound to the ribosome.

Its function is as follows. One of the early assembly proteins it binds 23S rRNA. One of the proteins that surrounds the polypeptide exit tunnel on the outside of the ribosome. Forms the main docking site for trigger factor binding to the ribosome. This Brucella melitensis biotype 2 (strain ATCC 23457) protein is Large ribosomal subunit protein uL23.